A 273-amino-acid chain; its full sequence is SET domain-containing protein 9 (273 aa).

Residues 96–269 (FSVAQATSSL…QGEELFSNYY (174 aa)) enclose the SET domain. Y268 contributes to the S-adenosyl-L-methionine binding site.

This sequence belongs to the class V-like SAM-binding methyltransferase superfamily.

The protein is SET domain-containing protein 9 (SETD9) of Pongo abelii (Sumatran orangutan).